The following is a 337-amino-acid chain: o-succinylbenzoate synthase (337 aa).

The Proton donor role is filled by Lys-142. The Mg(2+) site is built by Asp-170, Glu-199, and Asp-222. Lys-248 acts as the Proton acceptor in catalysis.

The protein belongs to the mandelate racemase/muconate lactonizing enzyme family. MenC type 1 subfamily. Requires a divalent metal cation as cofactor.

It catalyses the reaction (1R,6R)-6-hydroxy-2-succinyl-cyclohexa-2,4-diene-1-carboxylate = 2-succinylbenzoate + H2O. It participates in quinol/quinone metabolism; 1,4-dihydroxy-2-naphthoate biosynthesis; 1,4-dihydroxy-2-naphthoate from chorismate: step 4/7. The protein operates within quinol/quinone metabolism; menaquinone biosynthesis. Functionally, converts 2-succinyl-6-hydroxy-2,4-cyclohexadiene-1-carboxylate (SHCHC) to 2-succinylbenzoate (OSB). This chain is o-succinylbenzoate synthase, found in Pasteurella multocida (strain Pm70).